A 104-amino-acid polypeptide reads, in one-letter code: Iron-sulfur cluster assembly protein CyaY (104 aa).

The protein belongs to the frataxin family.

Its function is as follows. Involved in iron-sulfur (Fe-S) cluster assembly. May act as a regulator of Fe-S biogenesis. The protein is Iron-sulfur cluster assembly protein CyaY of Aliivibrio salmonicida (strain LFI1238) (Vibrio salmonicida (strain LFI1238)).